Here is a 75-residue protein sequence, read N- to C-terminus: Brevinin-2SN1 (75 aa).

The N-terminal stretch at 1–22 is a signal peptide; sequence MFTMKKPLLFLFFLGTISLSFC. The propeptide at 23-40 is removed in mature form; that stretch reads EEERGADEDDEVEMTEEE. An intrachain disulfide couples C69 to C75.

This sequence belongs to the frog skin active peptide (FSAP) family. Brevinin subfamily. In terms of tissue distribution, expressed by the skin glands.

The protein localises to the secreted. Its function is as follows. Antimicrobial peptide. Active against some Gram-negative and a variety of Gram-positive bacterial strains. Active against fungus C.glabrata 090902 but not against C.albicans ATCC 10231. Shows hemolytic activity against human erythrocytes. This Sylvirana spinulosa (Fine-spined frog) protein is Brevinin-2SN1.